The chain runs to 552 residues: Metal transporter Nramp6.1 (552 aa).

N-linked (GlcNAc...) asparagine glycosylation is present at Asn-11. Transmembrane regions (helical) follow at residues 55–75, 88–108, 133–155, 159–181, 189–209, 238–258, and 275–295; these read FLSY…PGNL, ELLW…SLAA, CLWL…GTAF, ILFN…LLLG, KLEL…FGEM, IALL…ALVL, and YFLI…LAVI. Asn-306 carries N-linked (GlcNAc...) asparagine glycosylation. The next 5 helical transmembrane spans lie at 338 to 358, 377 to 397, 402 to 422, 438 to 458, and 478 to 498; these read IYAI…TYAG, LVTR…GGSS, LIII…IPLL, IYII…NIYY, and VFIG…VIYL. The tract at residues 511 to 552 is disordered; that stretch reads PNKNDPQQQTNMENGLAKSTEGPEMVDRAPYREDLADIPLPE. Residues 514–523 are compositionally biased toward polar residues; the sequence is NDPQQQTNME. Over residues 535–545 the composition is skewed to basic and acidic residues; that stretch reads MVDRAPYREDL.

The protein belongs to the NRAMP (TC 2.A.55) family.

It is found in the membrane. Functionally, probable divalent metal transporter. This Populus trichocarpa (Western balsam poplar) protein is Metal transporter Nramp6.1.